We begin with the raw amino-acid sequence, 116 residues long: Flagellar transcriptional regulator FlhD (116 aa).

It belongs to the FlhD family. As to quaternary structure, homodimer; disulfide-linked. Forms a heterohexamer composed of two FlhC and four FlhD subunits. Each FlhC binds a FlhD dimer, forming a heterotrimer, and a hexamer assembles by dimerization of two heterotrimers.

The protein resides in the cytoplasm. Functionally, functions in complex with FlhC as a master transcriptional regulator that regulates transcription of several flagellar and non-flagellar operons by binding to their promoter region. Activates expression of class 2 flagellar genes, including fliA, which is a flagellum-specific sigma factor that turns on the class 3 genes. Also regulates genes whose products function in a variety of physiological pathways. The polypeptide is Flagellar transcriptional regulator FlhD (Yersinia pseudotuberculosis serotype O:1b (strain IP 31758)).